Reading from the N-terminus, the 333-residue chain is tRNA(Ile)-lysidine synthase (333 aa).

33–38 (SGGADS) contacts ATP.

This sequence belongs to the tRNA(Ile)-lysidine synthase family.

The protein localises to the cytoplasm. The enzyme catalyses cytidine(34) in tRNA(Ile2) + L-lysine + ATP = lysidine(34) in tRNA(Ile2) + AMP + diphosphate + H(+). Ligates lysine onto the cytidine present at position 34 of the AUA codon-specific tRNA(Ile) that contains the anticodon CAU, in an ATP-dependent manner. Cytidine is converted to lysidine, thus changing the amino acid specificity of the tRNA from methionine to isoleucine. In Salinispora arenicola (strain CNS-205), this protein is tRNA(Ile)-lysidine synthase.